We begin with the raw amino-acid sequence, 462 residues long: ATP synthase subunit beta 2 (462 aa).

151 to 158 (GGAGVGKT) serves as a coordination point for ATP.

This sequence belongs to the ATPase alpha/beta chains family. In terms of assembly, F-type ATPases have 2 components, CF(1) - the catalytic core - and CF(0) - the membrane proton channel. CF(1) has five subunits: alpha(3), beta(3), gamma(1), delta(1), epsilon(1). CF(0) has three main subunits: a(1), b(2) and c(9-12). The alpha and beta chains form an alternating ring which encloses part of the gamma chain. CF(1) is attached to CF(0) by a central stalk formed by the gamma and epsilon chains, while a peripheral stalk is formed by the delta and b chains.

Its subcellular location is the cell inner membrane. It catalyses the reaction ATP + H2O + 4 H(+)(in) = ADP + phosphate + 5 H(+)(out). Functionally, produces ATP from ADP in the presence of a proton gradient across the membrane. The catalytic sites are hosted primarily by the beta subunits. The sequence is that of ATP synthase subunit beta 2 from Chlorobaculum tepidum (strain ATCC 49652 / DSM 12025 / NBRC 103806 / TLS) (Chlorobium tepidum).